The sequence spans 284 residues: MVAACSAYAAVNVATQWAGTRTGIPSVIIAFWQYVIALVLTLPLLVRDGTRALRTSHFGLHVMRVALAAAGVQVWIYALTHVPIWQVVALSMTSPFFVILCARLFLQEKVTPARLLTTFTGFIGALIIIAPWSDSYTVYSLLPILAAALWAGYSVMTKYLTRFEKPASISAYMLVLLTPINAALWLASGLSMSAITAPDVEIWSILIVIGAFTALAQYFQTAAYSIADAVYLQPFDDLRLPINVIFGWIVFAAAPSINFWPGAALIIGASLYLMRQDSGTSRTA.

2 consecutive EamA domains span residues 2–129 (VAAC…LIII) and 141–273 (LLPI…SLYL). Transmembrane regions (helical) follow at residues 26 to 46 (SVII…PLLV), 58 to 78 (FGLH…WIYA), 82 to 102 (VPIW…ILCA), 115 to 135 (LLTT…WSDS), 136 to 156 (YTVY…YSVM), 167 to 187 (ASIS…LWLA), 195 to 215 (ITAP…FTAL), and 247 to 267 (GWIV…ALII).

The protein belongs to the drug/metabolite transporter (DMT) superfamily. 10 TMS drug/metabolite exporter (DME) (TC 2.A.7.3) family.

It is found in the cell membrane. Functionally, transports riboflavin into the cell. The sequence is that of Riboflavin transporter from Brucella anthropi (strain ATCC 49188 / DSM 6882 / CCUG 24695 / JCM 21032 / LMG 3331 / NBRC 15819 / NCTC 12168 / Alc 37) (Ochrobactrum anthropi).